Here is a 57-residue protein sequence, read N- to C-terminus: Major exported protein (57 aa).

This sequence belongs to the hcp1 family. In terms of assembly, homodimer.

The protein localises to the secreted. In Pseudomonas syringae pv. ribicola, this protein is Major exported protein.